The following is a 416-amino-acid chain: MDYDFKVKLTGERERVEDLFEYEGCKVGRGTYGHVYKAKRKDGKDDRDYALKQIEGTGISMSACREIALLRELKHPNVISLQKVFLSHADRKVWLLFDFAEHDLWHIIKFHRASKANKKPVQLPRGMVKSLLYQILDGIHYLHANWVLHRDLKPANILVMGEGPERGRVKIADMGFARLFNSPLKPLADLDPVVVTFWYRAPELLLGARHYTKAIDKDWEDIKKMPEHSTLIKDFRRNTYTNCSLIKYMEKHKVKPDSKTFHLLQKLLTMDPIKRISSEQAMQDPYFLEDPLPTSDVFAGCQIPYPKREFLTEEEPDDKGDKKNQQQQQGNNHTNGTGHPGNQDNSHAQGPPLKKVRVVPPTTTSGGLIMTSDYQRSNPHAAYQNPGPSTSQPQSSMGYTSTSQQPPQYSHQTHRY.

The interval 1–15 (MDYDFKVKLTGERER) is interaction with CCNC. The region spanning 21 to 287 (EYEGCKVGRG…SEQAMQDPYF (267 aa)) is the Protein kinase domain. ATP is bound by residues 27 to 35 (VGRGTYGHV) and lysine 52. Aspartate 151 acts as the Proton acceptor in catalysis. Residues 313 to 416 (EEEPDDKGDK…PQYSHQTHRY (104 aa)) form a disordered region. Residues 325 to 343 (QQQQQGNNHTNGTGHPGNQ) show a composition bias toward low complexity. Polar residues-rich tracts occupy residues 361–378 (PTTT…QRSN) and 386–416 (PGPS…THRY).

Belongs to the protein kinase superfamily. CMGC Ser/Thr protein kinase family. CDC2/CDKX subfamily. As to quaternary structure, component of the Mediator complex. Interacts with ccnc. Requires Mg(2+) as cofactor.

The protein resides in the nucleus. The catalysed reaction is L-seryl-[protein] + ATP = O-phospho-L-seryl-[protein] + ADP + H(+). It catalyses the reaction L-threonyl-[protein] + ATP = O-phospho-L-threonyl-[protein] + ADP + H(+). The enzyme catalyses [DNA-directed RNA polymerase] + ATP = phospho-[DNA-directed RNA polymerase] + ADP + H(+). Component of the Mediator complex, a coactivator involved in regulated gene transcription of nearly all RNA polymerase II-dependent genes. Mediator functions as a bridge to convey information from gene-specific regulatory proteins to the basal RNA polymerase II transcription machinery. Mediator is recruited to promoters by direct interactions with regulatory proteins and serves as a scaffold for the assembly of a functional pre-initiation complex with RNA polymerase II and the general transcription factors. Phosphorylates the CTD (C-terminal domain) of the large subunit of RNA polymerase II (RNAp II), which may inhibit the formation of a transcription initiation complex. The polypeptide is Cyclin-dependent kinase 8 (cdk8) (Xenopus laevis (African clawed frog)).